Consider the following 167-residue polypeptide: Ureidoglycolate lyase (167 aa).

Belongs to the ureidoglycolate lyase family. Homodimer. Requires Ni(2+) as cofactor.

It carries out the reaction (S)-ureidoglycolate = urea + glyoxylate. It participates in nitrogen metabolism; (S)-allantoin degradation. Functionally, catalyzes the catabolism of the allantoin degradation intermediate (S)-ureidoglycolate, generating urea and glyoxylate. Involved in the utilization of allantoin as nitrogen source. This chain is Ureidoglycolate lyase, found in Pseudomonas entomophila (strain L48).